A 338-amino-acid polypeptide reads, in one-letter code: Fructose-1,6-bisphosphatase class 1 (338 aa).

Positions 90, 112, 114, and 115 each coordinate Mg(2+). Substrate is bound by residues 115–118 (DGSS), Asn207, and Lys273. Mg(2+) is bound at residue Glu279.

The protein belongs to the FBPase class 1 family. As to quaternary structure, homotetramer. Mg(2+) serves as cofactor.

It is found in the cytoplasm. It carries out the reaction beta-D-fructose 1,6-bisphosphate + H2O = beta-D-fructose 6-phosphate + phosphate. The protein operates within carbohydrate biosynthesis; gluconeogenesis. The protein is Fructose-1,6-bisphosphatase class 1 of Stenotrophomonas maltophilia (strain R551-3).